The primary structure comprises 484 residues: MNILLAASEVAPFAKTGGLADVAGALPQELHRLGHDVRIIMPLYRSVRKQHLSLQHLGELPAVKMGDAIRTGRLWQGSLQDVPVYFLEQDDYFDRDGLYGTSQNDYPDNAERFGFFGRGLLAALPQIGFKPEILHLNDWQTGLVPALLRTEWAEDPFYAGTATMTTIHNLGYQGLFPAETVATLGLDPALYTMEGLEYYDQVSFLKSGLVYADMITTVSETYCAEIQTPQMGHGFDGILHARAARLFGVLNGIDDKLWNPQCDPALTAPYSVDDLEGKAANKRQLQKQLGLSCDADVPLLTMVTRLASQKGLDLVEQAWEQLLQRGVQLVILGSGDQDFMDRFAQLGAQHPTQTAVRLGFDDRLARLIYAGSDMFLMPSHYEPCGLGQLIALRYGSVPVVRKTGGLADTVFDPQDQATQANGFTFREISPSAMLAALDRALALYRQPEGWKQLVRRGMQGDFSWRQSALRYVELYRKAVELHHA.

ADP-alpha-D-glucose is bound at residue Lys-15.

It belongs to the glycosyltransferase 1 family. Bacterial/plant glycogen synthase subfamily.

It catalyses the reaction [(1-&gt;4)-alpha-D-glucosyl](n) + ADP-alpha-D-glucose = [(1-&gt;4)-alpha-D-glucosyl](n+1) + ADP + H(+). It participates in glycan biosynthesis; glycogen biosynthesis. Synthesizes alpha-1,4-glucan chains using ADP-glucose. The sequence is that of Glycogen synthase from Syntrophotalea carbinolica (strain DSM 2380 / NBRC 103641 / GraBd1) (Pelobacter carbinolicus).